A 432-amino-acid chain; its full sequence is UPF0597 protein APL_1605 (432 aa).

This sequence belongs to the UPF0597 family.

This is UPF0597 protein APL_1605 from Actinobacillus pleuropneumoniae serotype 5b (strain L20).